Here is a 71-residue protein sequence, read N- to C-terminus: UPF0346 protein SPP_0954 (71 aa).

The protein belongs to the UPF0346 family.

This is UPF0346 protein SPP_0954 from Streptococcus pneumoniae (strain P1031).